The following is a 157-amino-acid chain: Molybdopterin synthase catalytic subunit (157 aa).

Residues 103 to 104 (HR), lysine 119, and 126 to 128 (KKE) each bind substrate.

The protein belongs to the MoaE family. MOCS2B subfamily. In terms of assembly, heterotetramer; composed of 2 small (MOCS2A) and 2 large (MOCS2B) subunits.

It is found in the cytoplasm. It catalyses the reaction 2 [molybdopterin-synthase sulfur-carrier protein]-C-terminal-Gly-aminoethanethioate + cyclic pyranopterin phosphate + H2O = molybdopterin + 2 [molybdopterin-synthase sulfur-carrier protein]-C-terminal Gly-Gly + 2 H(+). It participates in cofactor biosynthesis; molybdopterin biosynthesis. Its function is as follows. Catalytic subunit of the molybdopterin synthase complex, a complex that catalyzes the conversion of precursor Z into molybdopterin. Acts by mediating the incorporation of 2 sulfur atoms from thiocarboxylated MOCS2A into precursor Z to generate a dithiolene group. In Culex quinquefasciatus (Southern house mosquito), this protein is Molybdopterin synthase catalytic subunit.